Reading from the N-terminus, the 474-residue chain is Protein FAM161A (474 aa).

Disordered regions lie at residues 78–126, 185–210, and 308–364; these read SSSS…PGEI, QKRR…DDAE, and REEL…DQGL. The stretch at 188-250 forms a coiled coil; the sequence is REKASDAQET…KKTRERSKAA (63 aa). Residues 274-454 are required for interaction with CFAP418; that stretch reads KLRELCRAKK…PTASSRGREQ (181 aa). The span at 325-335 shows a compositional bias: polar residues; sequence LQSSPWPSHST. Glycyl lysine isopeptide (Lys-Gly) (interchain with G-Cter in SUMO2) cross-links involve residues Lys397 and Lys413. The tract at residues 412-474 is disordered; sequence LKETRRPNPS…KELARIGGAR (63 aa). Residues 422–431 are compositionally biased toward basic residues; that stretch reads PRHKSPRRSA. The span at 450 to 468 shows a compositional bias: basic and acidic residues; the sequence is RGREQAIRRSEKARMKELA.

The protein belongs to the FAM161 family. As to quaternary structure, interacts (via central region) with CFAP418 (via N-terminus); the interaction is direct. Interacts (via C-terminus) with microtubules. Interacts with LCA5. Interacts with CEP290. Interacts with SDCCAG8. Interacts with FAM161B. Interacts with POC1B. Interacts with CEP78. Forms a microtubule-associated complex with POC5, CETN2 and POC1B. Interacts with CCDC15. In terms of tissue distribution, expressed in the retina and kidney.

Its subcellular location is the cytoplasm. It is found in the cytoskeleton. It localises to the cilium basal body. The protein resides in the cell projection. The protein localises to the cilium. Its subcellular location is the microtubule organizing center. It is found in the centrosome. It localises to the centriole. Functionally, involved in ciliogenesis. In Rattus norvegicus (Rat), this protein is Protein FAM161A.